The chain runs to 87 residues: Phosphoribosyl-ATP pyrophosphatase (87 aa).

This sequence belongs to the PRA-PH family.

The protein resides in the cytoplasm. The catalysed reaction is 1-(5-phospho-beta-D-ribosyl)-ATP + H2O = 1-(5-phospho-beta-D-ribosyl)-5'-AMP + diphosphate + H(+). The protein operates within amino-acid biosynthesis; L-histidine biosynthesis; L-histidine from 5-phospho-alpha-D-ribose 1-diphosphate: step 2/9. The polypeptide is Phosphoribosyl-ATP pyrophosphatase (hisE) (Corynebacterium glutamicum (strain ATCC 13032 / DSM 20300 / JCM 1318 / BCRC 11384 / CCUG 27702 / LMG 3730 / NBRC 12168 / NCIMB 10025 / NRRL B-2784 / 534)).